The sequence spans 550 residues: Iduronate 2-sulfatase (550 aa).

Positions 1-25 (MPPPRTGRGLLWLGLVLSSVCVALG) are cleaved as a signal peptide. The propeptide occupies 26–33 (SETQANST). Residues D45, D46, and C84 each coordinate Ca(2+). C84 (nucleophile) is an active-site residue. At C84 the chain carries 3-oxoalanine (Cys). N115 is a glycosylation site (N-linked (GlcNAc...) asparagine). Residue H138 is part of the active site. N144 is a glycosylation site (N-linked (GlcNAc...) asparagine). C171 and C184 are oxidised to a cystine. N-linked (GlcNAc...) asparagine glycans are attached at residues N246, N280, and N325. Ca(2+) is bound by residues D334 and H335. C422 and C432 are oxidised to a cystine. 2 N-linked (GlcNAc...) asparagine glycosylation sites follow: N513 and N537.

The protein belongs to the sulfatase family. In terms of assembly, monomer. The 58-kDa mature form is composed of two chains resulting from proteolitic processing, the 42-kDa chain and the 14-kDa chain that remain stably associated and form the 58-kDa intermediate form which is enzymatically active. Ca(2+) serves as cofactor. In terms of processing, synthesized as a 75-kDa precursor form in the endoplasmic reticulum (ER), and then processed by proteolytic cleavage through various intermediates to yield a 55-kDa mature form, with the release of an 18 kDa polypeptide. Post-translationally, the conversion to 3-oxoalanine (also known as C-formylglycine, FGly), of a serine or cysteine residue in prokaryotes and of a cysteine residue in eukaryotes, is critical for catalytic activity. In terms of tissue distribution, liver, kidney, lung, and placenta.

The protein resides in the lysosome. It carries out the reaction Hydrolysis of the 2-sulfate groups of the L-iduronate 2-sulfate units of dermatan sulfate, heparan sulfate and heparin.. Lysosomal enzyme involved in the degradation pathway of dermatan sulfate and heparan sulfate. The sequence is that of Iduronate 2-sulfatase (IDS) from Homo sapiens (Human).